The following is a 491-amino-acid chain: MADPSLNDNPTACPHCASSQAGLLCVCPAGKSPVLVVEMSQTSSIGSTEFFASQERKKERNTSRESSLKDLSIRTSNVERKPQAQWSRSNVTVGKIPHIRMDDGAGIEEFYTFGRILGQGSFGMVFEAIDKETGAKWAIKKVNKEKAGSSAMKLLEREVSILKTVNHQHIIHLEQVFESPQKMYLVMELCEDGELKAVMDQRGHFSENETRLIIQSLASAIAYLHNKDIVHRDLKLENIMVKSSFIDDNNEMNLNIKVTDFGLSVQKHGSRSEGMMQTTCGTPIYMAPEVINAHDYSQQCDIWSIGVIMFILLCGEPPFLANSEEKLYELIKKGELRFENPVWESVSDSAKNTLKQLMKVDPAHRITAKELLDNQWLTGNTLSSARPTNVLEMMKEWKNNPESDEETNTDEETEQSAVYSPSANTAKQPTNAAKKPAAESVGMTSSNSSSSKLLSAESKAEPEKSSETVGHASVAKTTLKSTTLFRGKKRL.

The interval 51-89 (FASQERKKERNTSRESSLKDLSIRTSNVERKPQAQWSRS) is disordered. A compositionally biased stretch (basic and acidic residues) spans 54–82 (QERKKERNTSRESSLKDLSIRTSNVERKP). A Protein kinase domain is found at 111 to 377 (YTFGRILGQG…AKELLDNQWL (267 aa)). ATP is bound by residues 117 to 125 (LGQGSFGMV) and K140. D233 acts as the Proton acceptor in catalysis. Positions 398-491 (KNNPESDEET…TTLFRGKKRL (94 aa)) are disordered. The segment covering 402 to 414 (ESDEETNTDEETE) has biased composition (acidic residues). At S403 the chain carries Phosphoserine. Over residues 415 to 431 (QSAVYSPSANTAKQPTN) the composition is skewed to polar residues. Low complexity predominate over residues 445-457 (SSNSSSSKLLSAE). Residues 475–484 (AKTTLKSTTL) show a composition bias toward polar residues.

This sequence belongs to the protein kinase superfamily. CAMK Ser/Thr protein kinase family. CaMK subfamily. Homodimer. In terms of processing, autophosphorylated. As to expression, highly expressed in testis, particularly in cells from the spermatogenic epithelia. Present in meiotic and post meiotic sperm cells. Significant expression is detected in lung epithelia, alveolar macrophages, horizontal cells in the retina and in embryonic organs such as heart, brain and spinal cord. Also expressed in pituitary gland, kidney, pancreas, trachea and thyroid gland.

The protein resides in the cytoplasm. The protein localises to the cytoskeleton. It is found in the perinuclear region. It carries out the reaction L-seryl-[protein] + ATP = O-phospho-L-seryl-[protein] + ADP + H(+). The catalysed reaction is L-threonyl-[protein] + ATP = O-phospho-L-threonyl-[protein] + ADP + H(+). With respect to regulation, specifically inhibited by CDD-2807 ((3-([1,1'-Biphenyl]-2-ylethynyl)-1H-indazol-5-yl)(2,6-diazaspiro[3.5]nonan-2-yl)methanone). CDD-2807 is a potential male contraceptive drug: it is not toxic, efficiently crosses the blood-testis barrier and induces a reversible contraceptive effect in male mice. Functionally, serine/threonine protein kinase required for spermatid differentiation and male fertility. Promotes sperm flagella assembly during spermatogenesis by mediating phosphorylation of fibrous sheath proteins AKAP3 and AKAP4. Also phosphorylates vimentin/VIM, thereby regulating the dynamic behavior of the intermediate filament cytoskeleton. This Mus musculus (Mouse) protein is Serine/threonine-protein kinase 33.